Reading from the N-terminus, the 420-residue chain is Zinc finger protein Pegasus (420 aa).

A Glycyl lysine isopeptide (Lys-Gly) (interchain with G-Cter in SUMO2) cross-link involves residue Lys-5. C2H2-type zinc fingers lie at residues 82–104, 110–132, and 138–161; these read LKCRYCNYASKGTARLIEHIRIH, HRCHLCPFASAYERHLEAHMRSH, and YKCELCSFRCSDRSNLSHHRRRKH. Lys-185 is covalently cross-linked (Glycyl lysine isopeptide (Lys-Gly) (interchain with G-Cter in SUMO2)). 2 stretches are compositionally biased toward polar residues: residues 223 to 236 and 262 to 273; these read QTDSYESMAKTTPT and LSSLPPENQNPA. 2 disordered regions span residues 223–247 and 262–356; these read QTDSYESMAKTTPTGGLPRDPQELM and LSSL…PALP. Positions 290 to 311 are enriched in low complexity; the sequence is QPSTQAVVSAVSASIPQSSSPT. Polar residues predominate over residues 332 to 349; it reads SEPSAHTSTPSIGNSQPS. Residues 364–387 form a C2H2-type 4; degenerate zinc finger; it reads HHCQHCDMYFFADNILYTIHMGCH. A C2H2-type 5 zinc finger spans residues 393–417; the sequence is FQCNICGCKCKNKYDFACHFARGQH.

The protein belongs to the Ikaros C2H2-type zinc-finger protein family. In terms of assembly, self-associates. Interacts with other family members; IKZF1, IKZF2, IKZF3 and IKZF4.

Its subcellular location is the nucleus. Transcriptional repressor that binds the core 5'GNNTGTNG-3' DNA consensus sequence. Involved in megakaryocyte differentiation. The protein is Zinc finger protein Pegasus (IKZF5) of Pongo abelii (Sumatran orangutan).